We begin with the raw amino-acid sequence, 621 residues long: 5-aminolevulinate synthase, mitochondrial (621 aa).

Residues 76–95 form a disordered region; that stretch reads DAKGSLAGRPVHHKAATEST. The substrate site is built by R122 and S234. S286, H314, and T359 together coordinate pyridoxal 5'-phosphate. K362 is an active-site residue. The residue at position 362 (K362) is an N6-(pyridoxal phosphate)lysine. Pyridoxal 5'-phosphate-binding residues include T391 and T392. Position 477 (T477) interacts with substrate.

This sequence belongs to the class-II pyridoxal-phosphate-dependent aminotransferase family. As to quaternary structure, homodimer. It depends on pyridoxal 5'-phosphate as a cofactor.

The protein resides in the mitochondrion matrix. It carries out the reaction succinyl-CoA + glycine + H(+) = 5-aminolevulinate + CO2 + CoA. It participates in porphyrin-containing compound metabolism; protoporphyrin-IX biosynthesis; 5-aminolevulinate from glycine: step 1/1. Catalyzes the synthesis of 5-aminolevulinate (ALA) from succinyl-CoA and glycine, the first and rate-limiting step in heme biosynthesis. In Agaricus bisporus (White button mushroom), this protein is 5-aminolevulinate synthase, mitochondrial (hem1).